A 283-amino-acid chain; its full sequence is 2-dehydro-3-deoxyphosphooctonate aldolase (283 aa).

The protein belongs to the KdsA family.

Its subcellular location is the cytoplasm. It catalyses the reaction D-arabinose 5-phosphate + phosphoenolpyruvate + H2O = 3-deoxy-alpha-D-manno-2-octulosonate-8-phosphate + phosphate. The protein operates within carbohydrate biosynthesis; 3-deoxy-D-manno-octulosonate biosynthesis; 3-deoxy-D-manno-octulosonate from D-ribulose 5-phosphate: step 2/3. It participates in bacterial outer membrane biogenesis; lipopolysaccharide biosynthesis. The sequence is that of 2-dehydro-3-deoxyphosphooctonate aldolase from Methylococcus capsulatus (strain ATCC 33009 / NCIMB 11132 / Bath).